The following is an 838-amino-acid chain: Protein translocase subunit SecA (838 aa).

ATP is bound by residues Q87, 105–109 (GEGKT), and D494. 2 stretches are compositionally biased toward basic and acidic residues: residues 781–790 (EQEFQHKDET) and 803–819 (EDAK…KVGR). Residues 781 to 838 (EQEFQHKDETANVQYSGPAESAEDAKKEPKRREAPKVGRNDPCPCGSGKKYKKCHGAK) form a disordered region. Residues C823, C825, C834, and H835 each contribute to the Zn(2+) site. Residues 829-838 (KKYKKCHGAK) show a composition bias toward basic residues.

Belongs to the SecA family. As to quaternary structure, monomer and homodimer. Part of the essential Sec protein translocation apparatus which comprises SecA, SecYEG and auxiliary proteins SecDF-YajC and YidC. Zn(2+) is required as a cofactor.

It is found in the cell inner membrane. It localises to the cytoplasm. The enzyme catalyses ATP + H2O + cellular proteinSide 1 = ADP + phosphate + cellular proteinSide 2.. In terms of biological role, part of the Sec protein translocase complex. Interacts with the SecYEG preprotein conducting channel. Has a central role in coupling the hydrolysis of ATP to the transfer of proteins into and across the cell membrane, serving as an ATP-driven molecular motor driving the stepwise translocation of polypeptide chains across the membrane. The protein is Protein translocase subunit SecA of Solidesulfovibrio magneticus (strain ATCC 700980 / DSM 13731 / RS-1) (Desulfovibrio magneticus).